We begin with the raw amino-acid sequence, 312 residues long: Olfactory receptor 2L8 (312 aa).

Residues 1–24 (MENYNQTSTDFILLGLFPPSRIDL) lie on the Extracellular side of the membrane. N-linked (GlcNAc...) asparagine glycosylation occurs at N5. Residues 25–48 (FFFILIVFIFLMALIGNLSMILLI) traverse the membrane as a helical segment. At 49–56 (FLDTHLHT) the chain is on the cytoplasmic side. A helical membrane pass occupies residues 57 to 78 (PMYFLLSQLSLIDLNYISTIVP). The Extracellular segment spans residues 79 to 99 (KMASDFLHGNKSISFTGCGIQ). N88 carries an N-linked (GlcNAc...) asparagine glycan. An intrachain disulfide couples C96 to C188. The helical transmembrane segment at 100–119 (SFFFLALGGAEALLLASMAY) threads the bilayer. At 120 to 138 (DRYIAICFPLHYLIRMSKR) the chain is on the cytoplasmic side. A helical membrane pass occupies residues 139–157 (VCVLMITGSWIIGSINACA). Over 158-194 (HTVYVLHIPYCRSRAINHFFCDVPAMVTLACMDTWVY) the chain is Extracellular. The helical transmembrane segment at 195 to 218 (EGTVFLSATIFLVFPFIGISCSYG) threads the bilayer. Topologically, residues 219 to 235 (QVLFAVYHMKSAEGRKK) are cytoplasmic. The chain crosses the membrane as a helical span at residues 236–258 (AYLTCSTHLTVVTFYYAPFVYTY). Residues 259 to 271 (LRPRSLRSPTEDK) lie on the Extracellular side of the membrane. The helical transmembrane segment at 272–291 (VLAVFYTILTPMLNPIIYSL) threads the bilayer. Residues 292 to 312 (RNKEVMGALTRVSQRICSVKM) lie on the Cytoplasmic side of the membrane.

It belongs to the G-protein coupled receptor 1 family.

The protein localises to the cell membrane. Odorant receptor. The sequence is that of Olfactory receptor 2L8 (OR2L8) from Homo sapiens (Human).